The sequence spans 278 residues: Phosphate import ATP-binding protein PstB (278 aa).

The 242-residue stretch at 32–273 (YETRDLNLWY…PSDKRTEDYI (242 aa)) folds into the ABC transporter domain. 64–71 (GPSGCGKS) is a binding site for ATP.

The protein belongs to the ABC transporter superfamily. Phosphate importer (TC 3.A.1.7) family. In terms of assembly, the complex is composed of two ATP-binding proteins (PstB), two transmembrane proteins (PstC and PstA) and a solute-binding protein (PstS).

The protein resides in the cell membrane. The enzyme catalyses phosphate(out) + ATP + H2O = ADP + 2 phosphate(in) + H(+). Part of the ABC transporter complex PstSACB involved in phosphate import. Responsible for energy coupling to the transport system. The polypeptide is Phosphate import ATP-binding protein PstB (Halalkalibacterium halodurans (strain ATCC BAA-125 / DSM 18197 / FERM 7344 / JCM 9153 / C-125) (Bacillus halodurans)).